The primary structure comprises 363 residues: MATAPRSLDTISLCSTVSSCPDRNGFYGGFQRTDKPKEPLSKAQIIAREKKWLYMIDNWSIYMSKNYKKIRDRCRKGIPKSVRPKAWFYLSGAYLLKKKNPNVYNELLEKPGNPTTIEEIKKDKHRQFPFHEMFLDEQKVGQIELFNVLKAYSIYNPKVGFCQAQAPIAAFLLMHLPAEDAFWVFVSVCDVYLQDYFIPGLEVIQNDAGILEGLLKKTCPPVYRHLQKHKVEPLLYMTDWFLCAMTRTLPWETLLRVWDCFLAEGIRVIFKVALVIIGASLSRHKVRKTCTGLCETLAVLRSPEEHIVEEEFIINNMMRLNLRVEDFQIEHTRQKARRAKQKAQQEAESSGSGNGHRRNMPTL.

A Rab-GAP TBC domain is found at Gly77–Gly265. The segment at Lys335–Leu363 is disordered.

Its subcellular location is the apical cell membrane. The protein resides in the cytoplasmic vesicle. The protein localises to the cell projection. It is found in the filopodium. Essential for ensuring the polarized growth of tracheal seamless tubes. During seamless tube morphogenesis, likely to act as a GTPase-activating protein (GAP) for Rab35 to regulate vesicle trafficking from the recycling endosomes to the lumenal apical membrane to ensure the polarized dynein motor complex-dependent growth of seamless tubes along the proximodistal axis in tracheal terminal cells. When the terminal branch lumen is growing, Rab35-GTP is active and likely directs the transport of apical membrane vesicles from the soma to the distal tip of elongating terminal cell branches thus providing a continuous supply of apical membrane components as the lumen grows. Whereas when Rab35-GDP is inactivated, presumably by this GAP, apical membrane vesicles are transported to a central location adjacent to the terminal cell nucleus. This is TBC1 domain family member whacked from Drosophila melanogaster (Fruit fly).